The chain runs to 346 residues: Endosome-associated-trafficking regulator 1 (346 aa).

Residues 46-67 (FVSSNSKRAFSKDSNQSTTQFR) are compositionally biased toward polar residues. Disordered stretches follow at residues 46 to 77 (FVSS…DGNL), 93 to 129 (LQED…GDES), and 153 to 173 (SPPA…SDSE). Residues 170–317 (SDSEEGLRLL…SGAQSSIKQL (148 aa)) are a coiled coil.

Belongs to the ENTR1 family.

It localises to the cytoplasm. Its subcellular location is the early endosome. The protein resides in the endosome. It is found in the recycling endosome. The protein localises to the midbody. It localises to the cytoskeleton. Its subcellular location is the microtubule organizing center. The protein resides in the centrosome. It is found in the cilium basal body. In terms of biological role, endosome-associated protein that plays a role in membrane receptor sorting, cytokinesis and ciliogenesis. The protein is Endosome-associated-trafficking regulator 1 of Xenopus tropicalis (Western clawed frog).